Consider the following 31-residue polypeptide: Photosystem I reaction center subunit XII (31 aa).

Residues 7-26 (QVFLALIIALIPGILADRLG) traverse the membrane as a helical segment.

This sequence belongs to the PsaM family.

Its subcellular location is the plastid. It is found in the chloroplast thylakoid membrane. The chain is Photosystem I reaction center subunit XII from Euglena deses.